Here is a 79-residue protein sequence, read N- to C-terminus: Ferredoxin oxidoreductase 1 subunit ForD (79 aa).

4Fe-4S ferredoxin-type domains follow at residues 3–35 (YVAQVIKDECSKYNCKQCTLFCPEPNTLMYTDE) and 37–65 (HHAYVNTLRCKGCALCVYVCSELLKRDSI). [4Fe-4S] cluster is bound by residues C12, C17, C20, C24, C46, C49, C52, and C56.

Heterotetramer of one alpha, one beta, one delta and one gamma chain. It depends on [4Fe-4S] cluster as a cofactor.

The protein is Ferredoxin oxidoreductase 1 subunit ForD (forD1) of Aquifex aeolicus (strain VF5).